Consider the following 42-residue polypeptide: MQEQILASCVNLLATLNQKCLFPCNNKGFFIEFNSLWTFFFV.

In Streptococcus mutans serotype c (strain ATCC 700610 / UA159), this protein is Aspartate-semialdehyde dehydrogenase leader peptide.